We begin with the raw amino-acid sequence, 100 residues long: Aspartyl/glutamyl-tRNA(Asn/Gln) amidotransferase subunit C (100 aa).

This sequence belongs to the GatC family. As to quaternary structure, heterotrimer of A, B and C subunits.

The catalysed reaction is L-glutamyl-tRNA(Gln) + L-glutamine + ATP + H2O = L-glutaminyl-tRNA(Gln) + L-glutamate + ADP + phosphate + H(+). It carries out the reaction L-aspartyl-tRNA(Asn) + L-glutamine + ATP + H2O = L-asparaginyl-tRNA(Asn) + L-glutamate + ADP + phosphate + 2 H(+). In terms of biological role, allows the formation of correctly charged Asn-tRNA(Asn) or Gln-tRNA(Gln) through the transamidation of misacylated Asp-tRNA(Asn) or Glu-tRNA(Gln) in organisms which lack either or both of asparaginyl-tRNA or glutaminyl-tRNA synthetases. The reaction takes place in the presence of glutamine and ATP through an activated phospho-Asp-tRNA(Asn) or phospho-Glu-tRNA(Gln). This is Aspartyl/glutamyl-tRNA(Asn/Gln) amidotransferase subunit C from Streptococcus pneumoniae (strain JJA).